Reading from the N-terminus, the 1423-residue chain is DNA-directed RNA polymerase subunit beta' (1423 aa).

4 residues coordinate Zn(2+): cysteine 70, cysteine 72, cysteine 85, and cysteine 88. The Mg(2+) site is built by aspartate 461, aspartate 463, and aspartate 465. Zn(2+) is bound by residues cysteine 809, cysteine 883, cysteine 890, and cysteine 893. Positions 1383–1423 (EEHAAELRQPVQADTGDDPLGAVVGESHGTDADAGDYLTEE) are disordered.

Belongs to the RNA polymerase beta' chain family. In terms of assembly, the RNAP catalytic core consists of 2 alpha, 1 beta, 1 beta' and 1 omega subunit. When a sigma factor is associated with the core the holoenzyme is formed, which can initiate transcription. It depends on Mg(2+) as a cofactor. Zn(2+) serves as cofactor.

It carries out the reaction RNA(n) + a ribonucleoside 5'-triphosphate = RNA(n+1) + diphosphate. In terms of biological role, DNA-dependent RNA polymerase catalyzes the transcription of DNA into RNA using the four ribonucleoside triphosphates as substrates. The sequence is that of DNA-directed RNA polymerase subunit beta' from Rhizorhabdus wittichii (strain DSM 6014 / CCUG 31198 / JCM 15750 / NBRC 105917 / EY 4224 / RW1) (Sphingomonas wittichii).